The chain runs to 615 residues: Mitochondrial distribution and morphology protein 34 (615 aa).

Residues 1-195 form the SMP-LTD domain; sequence MAFNFNWSPL…LPAIIHRLSL (195 aa). Disordered regions lie at residues 293-313, 346-566, and 596-615; these read SDKP…RTSS, ATTG…PQPD, and PAFW…YEPR. A compositionally biased stretch (polar residues) spans 301 to 313; that stretch reads TPASTPNLHRTSS. Residues 346 to 355 show a composition bias toward low complexity; that stretch reads ATTGLSLGSG. Residues 356–367 are compositionally biased toward basic residues; sequence RHSKAGRKKKMR. 3 stretches are compositionally biased toward polar residues: residues 384–403, 435–446, and 457–499; these read IGST…TRTP, DATTSARASESS, and VTAQ…YSSR. Residues 517–557 show a composition bias toward low complexity; that stretch reads QQQQFQQQQQQQQQQQQQQQQQQQQQQQQQQQQQQQQQQQQ. Basic and acidic residues predominate over residues 596–606; the sequence is PAFWEDSHQHD.

The protein belongs to the MDM34 family. As to quaternary structure, component of the ER-mitochondria encounter structure (ERMES) or MDM complex, composed of mmm-1, mdm10, mdm12 and mdm34.

The protein resides in the mitochondrion outer membrane. Functionally, component of the ERMES/MDM complex, which serves as a molecular tether to connect the endoplasmic reticulum (ER) and mitochondria. Components of this complex are involved in the control of mitochondrial shape and protein biogenesis, and function in nonvesicular lipid trafficking between the ER and mitochondria. Mdm34 is required for the interaction of the ER-resident membrane protein mmm-1 and the outer mitochondrial membrane-resident beta-barrel protein mdm10. This chain is Mitochondrial distribution and morphology protein 34, found in Neurospora crassa (strain ATCC 24698 / 74-OR23-1A / CBS 708.71 / DSM 1257 / FGSC 987).